The sequence spans 260 residues: Phosphate import ATP-binding protein PstB 2 (260 aa).

The ABC transporter domain maps to 9-255; it reads IKVKDLSFYY…PLDSRTRDYV (247 aa). 41-48 contributes to the ATP binding site; it reads GPSGCGKS.

Belongs to the ABC transporter superfamily. Phosphate importer (TC 3.A.1.7) family. In terms of assembly, the complex is composed of two ATP-binding proteins (PstB), two transmembrane proteins (PstC and PstA) and a solute-binding protein (PstS).

The protein resides in the cell inner membrane. The enzyme catalyses phosphate(out) + ATP + H2O = ADP + 2 phosphate(in) + H(+). Part of the ABC transporter complex PstSACB involved in phosphate import. Responsible for energy coupling to the transport system. This chain is Phosphate import ATP-binding protein PstB 2, found in Nostoc sp. (strain PCC 7120 / SAG 25.82 / UTEX 2576).